We begin with the raw amino-acid sequence, 346 residues long: Small ribosomal subunit biogenesis GTPase RsgA (346 aa).

The 164-residue stretch at 98–261 (VQGGRGPQLA…VIDTPGMRTL (164 aa)) folds into the CP-type G domain. Residues 148-151 (TKAD) and 200-208 (GSSGVGKST) contribute to the GTP site. Residues Cys-284, Cys-289, His-291, and Cys-297 each contribute to the Zn(2+) site. The disordered stretch occupies residues 317–346 (RKLSDENQHNTPVQSGPRGAKSPAGRGKRR).

It belongs to the TRAFAC class YlqF/YawG GTPase family. RsgA subfamily. As to quaternary structure, monomer. Associates with 30S ribosomal subunit, binds 16S rRNA. It depends on Zn(2+) as a cofactor.

It is found in the cytoplasm. One of several proteins that assist in the late maturation steps of the functional core of the 30S ribosomal subunit. Helps release RbfA from mature subunits. May play a role in the assembly of ribosomal proteins into the subunit. Circularly permuted GTPase that catalyzes slow GTP hydrolysis, GTPase activity is stimulated by the 30S ribosomal subunit. This is Small ribosomal subunit biogenesis GTPase RsgA from Mesorhizobium japonicum (strain LMG 29417 / CECT 9101 / MAFF 303099) (Mesorhizobium loti (strain MAFF 303099)).